A 475-amino-acid polypeptide reads, in one-letter code: MLRWLRGFVLPTAACQGAEPPTRYETLFQALDRNGDGVVDIRELQEGLKSLGIPLGQDAEEKIFTTGDVNKDGKLDFEEFMKYLKDHEKKMKLAFKSLDKNNDGKIEASEIVQSLQTLGLTISEQQAELILQSIDADGTMTVDWNEWRDYFLFNPVADIEEIIRFWKHSTGIDIGDSLTIPDEFTEEERKSGQWWRQLLAGGIAGAVSRTSTAPLDRLKVMMQVHGSKSMNIFGGFRQMIKEGGVRSLWRGNGTNVIKIAPETAVKFWVYEQYKKLLTEEGQKIGTFERFISGSMAGATAQTFIYPMEVMKTRLAVGKTGQYSGIYDCAKKILKYEGFGAFYKGYVPNLLGIIPYAGIDLAVYELLKSHWLDNFAKDSVNPGVLVLLGCGALSSTCGQLASYPLALVRTRMQAQAMLEGAPQLNMVGLFRRIISKEGLPGLYRGITPNFMKVLPAVGISYVVYENMKQTLGVTQK.

Residues 1 to 173 (MLRWLRGFVL…RFWKHSTGID (173 aa)) are regulatory N-terminal domain. The Mitochondrial intermembrane portion of the chain corresponds to 1-197 (MLRWLRGFVL…ERKSGQWWRQ (197 aa)). 4 consecutive EF-hand domains span residues 19–54 (EPPTRYETLFQALDRNGDGVVDIRELQEGLKSLGIP), 55–88 (LGQDAEEKIFTTGDVNKDGKLDFEEFMKYLKDHE), 86–121 (DHEKKMKLAFKSLDKNNDGKIEASEIVQSLQTLGLT), and 122–157 (ISEQQAELILQSIDADGTMTVDWNEWRDYFLFNPVA). Residues Asp-32, Asn-34, Asp-36, Val-38, Glu-43, Asp-68, Asn-70, Asp-72, Lys-74, Glu-79, Asp-99, Asn-101, Asp-103, Lys-105, Glu-110, Asp-135, Asp-137, Thr-139, Thr-141, and Glu-146 each coordinate Ca(2+). Residues 159–168 (IEEIIRFWKH) form a linker region region. Residues 174-475 (IGDSLTIPDE…MKQTLGVTQK (302 aa)) form a C-terminal transmembrane transporter domain region. Solcar repeat units follow at residues 192-276 (GQWW…YKKL), 284-369 (IGTF…LKSH), and 381-469 (PGVL…MKQT). Residues 198-215 (LLAGGIAGAVSRTSTAPL) traverse the membrane as a helical segment. Residues 216 to 250 (DRLKVMMQVHGSKSMNIFGGFRQMIKEGGVRSLWR) lie on the Mitochondrial matrix side of the membrane. Residues 251–270 (GNGTNVIKIAPETAVKFWVY) traverse the membrane as a helical segment. Over 271–293 (EQYKKLLTEEGQKIGTFERFISG) the chain is Mitochondrial intermembrane. The helical transmembrane segment at 294-307 (SMAGATAQTFIYPM) threads the bilayer. At 308–343 (EVMKTRLAVGKTGQYSGIYDCAKKILKYEGFGAFYK) the chain is on the mitochondrial matrix side. An N6-acetyllysine; alternate modification is found at Lys-318. Lys-318 carries the post-translational modification N6-succinyllysine; alternate. Lys-334 carries the post-translational modification N6-acetyllysine. The chain crosses the membrane as a helical span at residues 344–363 (GYVPNLLGIIPYAGIDLAVY). The Mitochondrial intermembrane portion of the chain corresponds to 364–386 (ELLKSHWLDNFAKDSVNPGVLVL). Residues 387-404 (LGCGALSSTCGQLASYPL) form a helical membrane-spanning segment. Residues 405–443 (ALVRTRMQAQAMLEGAPQLNMVGLFRRIISKEGLPGLYR) lie on the Mitochondrial matrix side of the membrane. Position 435 is an N6-acetyllysine; alternate (Lys-435). Position 435 is an N6-succinyllysine; alternate (Lys-435). A helical membrane pass occupies residues 444 to 463 (GITPNFMKVLPAVGISYVVY). Over 464–475 (ENMKQTLGVTQK) the chain is Mitochondrial intermembrane.

It belongs to the mitochondrial carrier (TC 2.A.29) family. Monomer. As to expression, mainly expressed in colon. Also expressed in the small intestine proximal to the ileum. Weakly expressed in kidney but not in the liver.

The protein localises to the mitochondrion inner membrane. The protein resides in the peroxisome membrane. It catalyses the reaction Mg(2+)(out) + phosphate(in) + ATP(out) = Mg(2+)(in) + phosphate(out) + ATP(in). The enzyme catalyses ADP(out) + phosphate(in) + H(+)(out) = ADP(in) + phosphate(out) + H(+)(in). The catalysed reaction is AMP(out) + phosphate(in) = AMP(in) + phosphate(out). It carries out the reaction phosphate(in) + ATP(out) + 2 H(+)(out) = phosphate(out) + ATP(in) + 2 H(+)(in). It catalyses the reaction dADP(in) + ADP(out) = dADP(out) + ADP(in). The enzyme catalyses Mg(2+)(in) + ADP(out) + ATP(in) + H(+)(out) = Mg(2+)(out) + ADP(in) + ATP(out) + H(+)(in). The catalysed reaction is ADP(out) + diphosphate(in) = ADP(in) + diphosphate(out). It carries out the reaction dAMP(in) + ADP(out) + H(+)(out) = dAMP(out) + ADP(in) + H(+)(in). It catalyses the reaction 3'-AMP(in) + ADP(out) + H(+)(out) = 3'-AMP(out) + ADP(in) + H(+)(in). The enzyme catalyses dAMP(out) + phosphate(in) = dAMP(in) + phosphate(out). The catalysed reaction is 3'-AMP(out) + phosphate(in) = 3'-AMP(in) + phosphate(out). It carries out the reaction dADP(out) + phosphate(in) + H(+)(out) = dADP(in) + phosphate(out) + H(+)(in). With respect to regulation, activated by an increase in cytosolic calcium levels that induce a conformational change of the N-terminal regulatory domain, uncapping the channel and allowing transport. Inhibited by bathophenanthroline, mersalyl, p-hydroxymercuribenzoate, bromcresol purple and tannic acid. Functionally, electroneutral antiporter that mediates the transport of adenyl nucleotides through the inner mitochondrial membrane. Originally identified as an ATP-magnesium/inorganic phosphate antiporter, it also acts as a broad specificity adenyl nucleotide antiporter. By regulating the mitochondrial matrix adenyl nucleotide pool could adapt to changing cellular energetic demands and indirectly regulate adenyl nucleotide-dependent metabolic pathways. In vitro, a low activity is also observed with guanyl and pyrimidine nucleotides. May play a role in protecting cells against oxidative stress-induced cell death, by buffering calcium levels in the mitochondrial matrix through the formation of calcium-phosphate precipitates. This chain is Mitochondrial adenyl nucleotide antiporter SLC25A24 (SLC25A24), found in Oryctolagus cuniculus (Rabbit).